An 88-amino-acid polypeptide reads, in one-letter code: Small ribosomal subunit protein uS17 (88 aa).

This sequence belongs to the universal ribosomal protein uS17 family. In terms of assembly, part of the 30S ribosomal subunit.

In terms of biological role, one of the primary rRNA binding proteins, it binds specifically to the 5'-end of 16S ribosomal RNA. This chain is Small ribosomal subunit protein uS17, found in Teredinibacter turnerae (strain ATCC 39867 / T7901).